We begin with the raw amino-acid sequence, 506 residues long: Tabersonine 16-hydroxylase 1 (506 aa).

Residues 1-21 (MEFYYFLYLAFLLFCFILSKT) form a helical membrane-spanning segment. Cys447 contacts heme.

It belongs to the cytochrome P450 family. Heme serves as cofactor. In terms of tissue distribution, predominantly expressed in young leaves of mature plants. Low expression in roots and flowers, but not detected in stems and old leaves. Found predominantly in leaf epidermis. Barely detected in roots, internodes, young and mature leaves, and flower buds, but relatively abundant in fully developed flowers. Not detected in leaf epidermal cells.

It localises to the endoplasmic reticulum membrane. The catalysed reaction is (-)-tabersonine + reduced [NADPH--hemoprotein reductase] + O2 = 16-hydroxytabersonine + oxidized [NADPH--hemoprotein reductase] + H2O + H(+). Its pathway is alkaloid biosynthesis; vindoline biosynthesis. Its function is as follows. Involved in the flower biosynthesis of vindoline, a precursor of vinblastine and vincristine. Hydroxylates specifically tabersonine, 2,3-dihydrotabersonine and 2,3-dihydro-3-hydroxytabersonine, but has no activity with naringenin, tryptamine, secologanin, strictosidine, ajmalicine, vindoline and catharanthine. In Catharanthus roseus (Madagascar periwinkle), this protein is Tabersonine 16-hydroxylase 1.